Here is a 245-residue protein sequence, read N- to C-terminus: Probable transcriptional regulatory protein Aflv_0709 (245 aa).

The span at 1-14 shows a compositional bias: basic residues; the sequence is MAGHSKWKNIQRRK. The interval 1 to 21 is disordered; the sequence is MAGHSKWKNIQRRKNAQDAKR.

The protein belongs to the TACO1 family.

It is found in the cytoplasm. In Anoxybacillus flavithermus (strain DSM 21510 / WK1), this protein is Probable transcriptional regulatory protein Aflv_0709.